A 156-amino-acid chain; its full sequence is Arginine repressor (156 aa).

This sequence belongs to the ArgR family.

Its subcellular location is the cytoplasm. The protein operates within amino-acid biosynthesis; L-arginine biosynthesis [regulation]. Its function is as follows. Regulates arginine biosynthesis genes. The polypeptide is Arginine repressor (Aeromonas hydrophila subsp. hydrophila (strain ATCC 7966 / DSM 30187 / BCRC 13018 / CCUG 14551 / JCM 1027 / KCTC 2358 / NCIMB 9240 / NCTC 8049)).